A 424-amino-acid polypeptide reads, in one-letter code: Magnesium-chelatase subunit ChlI-1, chloroplastic (424 aa).

Residues 1–60 (MASLLGTSSSAIWASPSLSSPSSKPSSSPICFRPGKLFGSKLNAGIQIRPKKNRSRYHVS) constitute a chloroplast transit peptide. At Val-61 the chain carries N-acetylvaline. 2 disulfide bridges follow: Cys-102/Cys-193 and Cys-354/Cys-396. Residue 119–126 (GDRGTGKS) coordinates ATP. Position 355 is a phosphoserine (Ser-355).

Belongs to the Mg-chelatase subunits D/I family. In terms of assembly, the magnesium chelatase complex is a heterotrimer consisting of subunits CHLI, CHLD and CHLH. Interacts with CHLH and CHLD.

The protein localises to the plastid. Its subcellular location is the chloroplast. It catalyses the reaction protoporphyrin IX + Mg(2+) + ATP + H2O = Mg-protoporphyrin IX + ADP + phosphate + 3 H(+). The protein operates within porphyrin-containing compound metabolism; chlorophyll biosynthesis. Redox regulation; active in reducing conditions, inactive in oxidizing conditions. Thioredoxins f and m mediate the reversible reductive activation of oxidized CHLI1. In terms of biological role, involved in chlorophyll biosynthesis. Catalyzes the insertion of magnesium ion into protoporphyrin IX to yield Mg-protoporphyrin IX. The magnesium-chelatase is a complex of three subunits, CHLI, CHLD and CHLH. The reaction takes place in two steps, with an ATP-dependent activation followed by an ATP-dependent chelation step. Possesses high affinity for ATP and may play a major role in chlorophyll biosynthesis. Does not bind abscisic acid (ABA), but is a positive regulator of ABA signaling. May be involved in ABA signaling in the control of stomatal aperture, but does not seem to have an effect on ABA-induced gene expression. The chain is Magnesium-chelatase subunit ChlI-1, chloroplastic (CHLI1) from Arabidopsis thaliana (Mouse-ear cress).